Reading from the N-terminus, the 820-residue chain is Serine/threonine-protein phosphatase 4 regulatory subunit 3-A (820 aa).

The region spanning 1–100 is the WH1 domain; sequence MSDTRRRVKV…DEIWEKICQV (100 aa). Positions 682–694 are enriched in acidic residues; that stretch reads ELWFNEDDEEEGE. 2 disordered regions span residues 682–712 and 750–820; these read ELWF…FPEG and AANG…RLGS. Residues 701–712 show a composition bias toward basic and acidic residues; sequence EKTKPEDDFPEG. Composition is skewed to polar residues over residues 750 to 761 and 768 to 790; these read AANGANSTNSKS and PATS…STKG. Residues 798 to 809 are compositionally biased toward acidic residues; the sequence is YPDDEDEEEEED.

It belongs to the SMEK family. Serine/threonine-protein phosphatase 4 (PP4) occurs in different assemblies of the catalytic and one or more regulatory subunits.

Functionally, regulatory subunit of serine/threonine-protein phosphatase 4 (PP4). This Xenopus laevis (African clawed frog) protein is Serine/threonine-protein phosphatase 4 regulatory subunit 3-A.